The following is a 365-amino-acid chain: MFYSKNAYLSMKEMTVNAQYILNYLLPRGWTKNAICGMLGNMQTESTINPGIWQNLDEGNTSLGFGLVQWTPATKYLNWADRNGLKRDHMDSQLKRILWEVDNNEQWINLRNMTFKEFTKSTKSANELAMIFLASYERPANPNQPERGTQAEYWFKTLTGKGSTGIQLAQFPMDIINITQGENGSFSHKGTLCIDFVGKHEKYPYYAPCDCTCVWRGDESAYLAWTSDKEVMCADGTVRYITWVCVHDENLLYNVGKKLKKGELMGHSGKGGRATGDHLHLNVIEGNKYQGWVKKPDSALAGTELHIYDVFAVNGVEIVNGLGYDWKTSDWVDGSDENNGDDKDKDKDETKNIVNLLLCGALNGW.

Residues 1–159 (MFYSKNAYLS…QAEYWFKTLT (159 aa)) are lysozyme-like glycosidase. Glutamate 45 functions as the For lysozyme-like glycosidase activity in the catalytic mechanism. Position 137-140 (137-140 (ERPA)) interacts with substrate. The linker stretch occupies residues 160–165 (GKGSTG). Positions 166–365 (IQLAQFPMDI…LLLCGALNGW (200 aa)) are probable metalloendopeptidase. Zn(2+)-binding residues include histidine 188, aspartate 195, and histidine 280.

The protein in the N-terminal section; belongs to the glycosyl hydrolase 24 family. This sequence in the C-terminal section; belongs to the peptidase M23B family. Requires Zn(2+) as cofactor.

The protein resides in the virion. In terms of biological role, essential for tail assembly and the production of infectious particles. Degrades the peptidoglycan layer of the host cell wall and thereby facilitates infection of host bacteria. Acts probably as multifunctional enzyme that degrades N-acetylglucosamine polymers (in vitro) and cleaves the peptide cross-links of the host cell wall. The polypeptide is Morphogenesis protein 1 (13) (Bacillus phage B103 (Bacteriophage B103)).